A 155-amino-acid chain; its full sequence is MDLGRFPIISILEDMLEVPEDHNNEKTRNNPSRVYMRDAKAMAATPADVIEHPNAYAFVVDMPGIKGDEIKVQVENDNVLVVSGERQRENKENEGVKYVRMERRMGKFMRKFQLPENADLDKISAVCHDGVLKVTVQKLPPPEPKKPKTIQVQVA.

Residues 38 to 155 enclose the sHSP domain; it reads DAKAMAATPA…KPKTIQVQVA (118 aa).

Belongs to the small heat shock protein (HSP20) family. May form oligomeric structures.

Its subcellular location is the cytoplasm. This chain is 17.6 kDa class II heat shock protein (HSP17.6), found in Arabidopsis thaliana (Mouse-ear cress).